The sequence spans 930 residues: Translation initiation factor IF-2 (930 aa).

The segment covering Phe-50 to Val-67 has biased composition (low complexity). 2 disordered regions span residues Phe-50 to Phe-196 and Glu-260 to Pro-346. Basic and acidic residues-rich tracts occupy residues Ser-68–Pro-90 and Phe-110–Arg-125. Residues Lys-129–Arg-141 are compositionally biased toward low complexity. Basic and acidic residues-rich tracts occupy residues Arg-157–Gln-172 and Val-262–Arg-295. Residues Asn-309–Asn-318 are compositionally biased toward low complexity. Over residues Val-337–Pro-346 the composition is skewed to basic and acidic residues. Residues Glu-432 to Glu-599 enclose the tr-type G domain. Positions Gly-441–Thr-448 are G1. Residue Gly-441–Thr-448 coordinates GTP. The segment at Gly-466–His-470 is G2. A G3 region spans residues Asp-487–Gly-490. GTP contacts are provided by residues Asp-487–His-491 and Asn-541–Asp-544. The tract at residues Asn-541–Asp-544 is G4. A G5 region spans residues Ser-577–Lys-579.

It belongs to the TRAFAC class translation factor GTPase superfamily. Classic translation factor GTPase family. IF-2 subfamily.

The protein resides in the cytoplasm. Its function is as follows. One of the essential components for the initiation of protein synthesis. Protects formylmethionyl-tRNA from spontaneous hydrolysis and promotes its binding to the 30S ribosomal subunits. Also involved in the hydrolysis of GTP during the formation of the 70S ribosomal complex. This is Translation initiation factor IF-2 from Streptococcus pneumoniae serotype 19F (strain G54).